The following is a 258-amino-acid chain: Phosphate import ATP-binding protein PstB (258 aa).

The ABC transporter domain maps to I13–I253. G45–S52 serves as a coordination point for ATP.

This sequence belongs to the ABC transporter superfamily. Phosphate importer (TC 3.A.1.7) family. In terms of assembly, the complex is composed of two ATP-binding proteins (PstB), two transmembrane proteins (PstC and PstA) and a solute-binding protein (PstS).

It localises to the cell membrane. The enzyme catalyses phosphate(out) + ATP + H2O = ADP + 2 phosphate(in) + H(+). In terms of biological role, part of the ABC transporter complex PstSACB involved in phosphate import. Responsible for energy coupling to the transport system. The sequence is that of Phosphate import ATP-binding protein PstB from Methanosarcina barkeri (strain Fusaro / DSM 804).